The primary structure comprises 331 residues: MSTKEKLISHVMKEEPVGSRNKVTVVGVGMVGMASAISILIKDLGDELAMVDVMEDKLKGEVMDLQHGSLFLKTKIVGDKDYSVTANSKVVVVTAGARQQEGESRLNLVQRNVNIFKFIIPNIVKYSPNCILMVVSNPVDILTYVAWKLSGFPRHRVLGSGTNLDSARFRHLIGEKLHLHPSSCHAWIVGEHGDSSVPVWSGVNVAGVSLQNLNPQMGTEGDGENWKAIHKEVVDGAYEVIKLKGYTSWAIGMSVADLVESIIKNMHKVHPVSTLVQGMHGVKDEVFLSVPCVLGNSGLTDVIHMTLKAEEEKQVQKSAETLWGVQKELTL.

NAD(+)-binding positions include 29–57 and R98; that span reads GMVGMASAISILIKDLGDELAMVDVMEDK. Substrate-binding residues include R105, N137, and R168. N137 is an NAD(+) binding site. Residue H192 is the Proton acceptor of the active site. T247 serves as a coordination point for substrate.

This sequence belongs to the LDH/MDH superfamily. LDH family. Homotetramer.

It is found in the cytoplasm. It carries out the reaction (S)-lactate + NAD(+) = pyruvate + NADH + H(+). Its pathway is fermentation; pyruvate fermentation to lactate; (S)-lactate from pyruvate: step 1/1. Its function is as follows. Interconverts simultaneously and stereospecifically pyruvate and lactate with concomitant interconversion of NADH and NAD(+). This chain is L-lactate dehydrogenase A chain (ldha), found in Harpagifer antarcticus (Antarctic spiny plunderfish).